The chain runs to 490 residues: Betaine aldehyde dehydrogenase (490 aa).

K(+) contacts are provided by T26, I27, and D93. 150 to 152 (GAW) lines the NAD(+) pocket. K162 (charge relay system) is an active-site residue. Residue 176-179 (KPSE) coordinates NAD(+). V180 contacts K(+). 230–233 (GVAS) is a binding site for NAD(+). L246 is a binding site for K(+). E252 functions as the Proton acceptor in the catalytic mechanism. NAD(+) is bound by residues G254, C286, and E387. The active-site Nucleophile is the C286. C286 is subject to Cysteine sulfenic acid (-SOH). Residues K457 and G460 each coordinate K(+). The active-site Charge relay system is the E464.

Belongs to the aldehyde dehydrogenase family. As to quaternary structure, dimer of dimers. It depends on K(+) as a cofactor.

The catalysed reaction is betaine aldehyde + NAD(+) + H2O = glycine betaine + NADH + 2 H(+). It functions in the pathway amine and polyamine biosynthesis; betaine biosynthesis via choline pathway; betaine from betaine aldehyde: step 1/1. In terms of biological role, involved in the biosynthesis of the osmoprotectant glycine betaine. Catalyzes the irreversible oxidation of betaine aldehyde to the corresponding acid. The protein is Betaine aldehyde dehydrogenase of Escherichia coli O45:K1 (strain S88 / ExPEC).